The chain runs to 345 residues: Biotin synthase (345 aa).

Positions 49 to 276 (NQVQMSTLLS…ASFVRLSAGR (228 aa)) constitute a Radical SAM core domain. [4Fe-4S] cluster-binding residues include Cys-64, Cys-68, and Cys-71. The [2Fe-2S] cluster site is built by Cys-108, Cys-139, Cys-199, and Arg-271.

This sequence belongs to the radical SAM superfamily. Biotin synthase family. Homodimer. The cofactor is [4Fe-4S] cluster. [2Fe-2S] cluster serves as cofactor.

It carries out the reaction (4R,5S)-dethiobiotin + (sulfur carrier)-SH + 2 reduced [2Fe-2S]-[ferredoxin] + 2 S-adenosyl-L-methionine = (sulfur carrier)-H + biotin + 2 5'-deoxyadenosine + 2 L-methionine + 2 oxidized [2Fe-2S]-[ferredoxin]. The protein operates within cofactor biosynthesis; biotin biosynthesis; biotin from 7,8-diaminononanoate: step 2/2. Catalyzes the conversion of dethiobiotin (DTB) to biotin by the insertion of a sulfur atom into dethiobiotin via a radical-based mechanism. The sequence is that of Biotin synthase from Nitrosococcus oceani (strain ATCC 19707 / BCRC 17464 / JCM 30415 / NCIMB 11848 / C-107).